Here is a 503-residue protein sequence, read N- to C-terminus: Maturase K (503 aa).

This sequence belongs to the intron maturase 2 family. MatK subfamily.

The protein localises to the plastid. The protein resides in the chloroplast. In terms of biological role, usually encoded in the trnK tRNA gene intron. Probably assists in splicing its own and other chloroplast group II introns. This chain is Maturase K, found in Rubus ursinus (California blackberry).